We begin with the raw amino-acid sequence, 99 residues long: MSENNAEVQKITLIDESGDEALYEVLFTFHSDEYNKDYILLVPEGIEDDEEVDIQAYIFNPDENGDATEEELIQIEDDKEWDMVEEVLNTFLEDDSNFN.

The protein belongs to the UPF0473 family.

This is UPF0473 protein LEUM_0559 from Leuconostoc mesenteroides subsp. mesenteroides (strain ATCC 8293 / DSM 20343 / BCRC 11652 / CCM 1803 / JCM 6124 / NCDO 523 / NBRC 100496 / NCIMB 8023 / NCTC 12954 / NRRL B-1118 / 37Y).